A 137-amino-acid chain; its full sequence is Large ribosomal subunit protein uL14A (137 aa).

Serine 2 is subject to N-acetylserine. Lysine 106 and lysine 110 each carry N6,N6-dimethyllysine; by RKM1.

The protein belongs to the universal ribosomal protein uL14 family. In terms of assembly, component of the large ribosomal subunit (LSU). Mature yeast ribosomes consist of a small (40S) and a large (60S) subunit. The 40S small subunit contains 1 molecule of ribosomal RNA (18S rRNA) and 33 different proteins (encoded by 57 genes). The large 60S subunit contains 3 rRNA molecules (25S, 5.8S and 5S rRNA) and 46 different proteins (encoded by 81 genes). Methylated by RKM1 at 2 different sites, but it is unclear which are the 2 methylated residues among Lys-40, Lys-106 and/or Lys-110.

The protein resides in the cytoplasm. Functionally, component of the ribosome, a large ribonucleoprotein complex responsible for the synthesis of proteins in the cell. The small ribosomal subunit (SSU) binds messenger RNAs (mRNAs) and translates the encoded message by selecting cognate aminoacyl-transfer RNA (tRNA) molecules. The large subunit (LSU) contains the ribosomal catalytic site termed the peptidyl transferase center (PTC), which catalyzes the formation of peptide bonds, thereby polymerizing the amino acids delivered by tRNAs into a polypeptide chain. The nascent polypeptides leave the ribosome through a tunnel in the LSU and interact with protein factors that function in enzymatic processing, targeting, and the membrane insertion of nascent chains at the exit of the ribosomal tunnel. The chain is Large ribosomal subunit protein uL14A from Saccharomyces cerevisiae (strain ATCC 204508 / S288c) (Baker's yeast).